Reading from the N-terminus, the 236-residue chain is MAPDPWFSTYDSTCQIAQEIAEKIQERNQCERRGEKTPKLTLTIRTLLKNLKVKIDLLKDLLLRAVSTRQITQLEGDRRQNLLDDLVTRERLLLASFKNEGAEPDLIRSSLMSEEAKRGTPNPWLCEEPEETRGLGFDEIRQQQQKIIQEQDAGLDALSSIISRQKQMGQEIGNELDEQNEIIDDLANLVENTDEKLRTEARRVTLVDRKSTSCGMIMVILLLLVAIVVVAVWPTN.

Over 1–215 (MAPDPWFSTY…LVDRKSTSCG (215 aa)) the chain is Cytoplasmic. Residues 42 to 65 (LTIRTLLKNLKVKIDLLKDLLLRA) are a coiled coil. The region spanning 145–207 (QKIIQEQDAG…RTEARRVTLV (63 aa)) is the t-SNARE coiled-coil homology domain. Ser160 bears the Phosphoserine mark. The helical; Anchor for type IV membrane protein transmembrane segment at 216 to 232 (MIMVILLLLVAIVVVAV) threads the bilayer. The Vesicular segment spans residues 233-236 (WPTN).

This sequence belongs to the syntaxin family. As to quaternary structure, forms a SNARE complex with STX7, VTI1B and VAMP8 which functions in the homotypic fusion of late endosomes. Part of the SNARE core complex containing STX7, VAMP8 and VTI1B. Interacts with VAMP8. Interacts with HECTD3. Interacts with TPC1. Post-translationally, ubiquitinated by HECTD3.

The protein resides in the membrane. In terms of biological role, vesicle trafficking protein that functions in the early secretory pathway, possibly by mediating retrograde transport from cis-Golgi membranes to the ER. The sequence is that of Syntaxin-8 (Stx8) from Mus musculus (Mouse).